A 224-amino-acid polypeptide reads, in one-letter code: Small ribosomal subunit protein uS3 (224 aa).

The region spanning Leu38–Arg106 is the KH type-2 domain.

This sequence belongs to the universal ribosomal protein uS3 family. In terms of assembly, part of the 30S ribosomal subunit. Forms a tight complex with proteins S10 and S14.

Its function is as follows. Binds the lower part of the 30S subunit head. Binds mRNA in the 70S ribosome, positioning it for translation. In Anaeromyxobacter sp. (strain Fw109-5), this protein is Small ribosomal subunit protein uS3.